A 176-amino-acid chain; its full sequence is Ribosome maturation factor RimM (176 aa).

Residues 97–176 (GDEFYWRELV…TIQVDWDPSF (80 aa)) form the PRC barrel domain.

It belongs to the RimM family. In terms of assembly, binds ribosomal protein uS19.

The protein localises to the cytoplasm. In terms of biological role, an accessory protein needed during the final step in the assembly of 30S ribosomal subunit, possibly for assembly of the head region. Essential for efficient processing of 16S rRNA. May be needed both before and after RbfA during the maturation of 16S rRNA. It has affinity for free ribosomal 30S subunits but not for 70S ribosomes. The polypeptide is Ribosome maturation factor RimM (Pseudoalteromonas atlantica (strain T6c / ATCC BAA-1087)).